Reading from the N-terminus, the 141-residue chain is Large ribosomal subunit protein uL16 (141 aa).

Residues 1–17 (MLMPKRTKFRKQMKGRN) show a composition bias toward basic residues. The tract at residues 1 to 22 (MLMPKRTKFRKQMKGRNRGYAT) is disordered.

Belongs to the universal ribosomal protein uL16 family. In terms of assembly, part of the 50S ribosomal subunit.

Binds 23S rRNA and is also seen to make contacts with the A and possibly P site tRNAs. The protein is Large ribosomal subunit protein uL16 of Campylobacter curvus (strain 525.92).